The sequence spans 409 residues: Glycosyltransferase GtfC (409 aa).

The protein belongs to the glycosyltransferase 28 family.

The enzyme catalyses dTDP-beta-L-vancosamine + devancoaminyl-vancomycin = epivancomycin + dTDP + H(+). The catalysed reaction is chloroorienticin B + dTDP-beta-L-vancosamine = chloroeremomycin + dTDP + H(+). It functions in the pathway antibiotic biosynthesis; vancomycin biosynthesis. Catalyzes the attachment of dTDP-L-4-epi-vancosamine to chloroorienticin B to form chloroeremomycin in the biosynthesis of glycopeptide antibiotic chloroeremomycin, a member of the vancomycin group of antibiotics. Also able to use dTDP-L-4-epi-vancosamine and devancoaminyl-vancomycin (DVV) to create epivancomycin. Acts downstream of GtfA. This is Glycosyltransferase GtfC (gtfC) from Amycolatopsis orientalis (Nocardia orientalis).